We begin with the raw amino-acid sequence, 89 residues long: Transcriptional regulator WhiB2 (89 aa).

The segment covering 1–15 (MVPEAPAPFEEPLPP) has biased composition (pro residues). The disordered stretch occupies residues 1-24 (MVPEAPAPFEEPLPPEATDQWQDR). In terms of domain architecture, 4Fe-4S Wbl-type spans 26 to 83 (LCAQTDPEAFFPEKGGSTREAKKICMGCEVRHECLEYALAHDERFGIWGGLSERERRR). Residue Cys27 participates in [4Fe-4S] cluster binding. Residue Ser42 is modified to Phosphoserine. The [4Fe-4S] cluster site is built by Cys50, Cys53, and Cys59.

This sequence belongs to the WhiB family. Requires [4Fe-4S] cluster as cofactor. Post-translationally, may be phosphorylated, possibly on Ser-42. The cluster is degraded quickly in the presence of air. Upon cluster removal intramolecular disulfide bonds are formed. In terms of processing, the Fe-S cluster can be nitrosylated by nitric oxide (NO).

It localises to the cytoplasm. Acts as a transcriptional regulator. Probably redox-responsive. The apo- but not holo-form probably binds DNA. Functionally, the apo-form functions as a chaperone, preventing aggregation or helping in correct refolding of a number of substrates; this activity does not require ATP or the ability to bind a Fe-S cluster. Chaperone activity is insensitive to the redox state of its cysteine residues. The apo-form has no protein disulfide reductase activity. The apo-form binds to its own promoter. This Mycobacterium tuberculosis (strain ATCC 25618 / H37Rv) protein is Transcriptional regulator WhiB2 (whiB2).